The chain runs to 662 residues: MSSRPPASPPAQGSRLLLLSLLLLGTVPGPRPGSAFYLPGLAPVNFCAEEKSNECKADIELFVNRLDSVESVLPYEYTAFDFCQASEGKRPSENLGQVLFGERIEPSPYKFTFNKKETCKLVCTKTYNTEKAEDKQKLDFLKKSMLLNYQHHWIVDNMPVTWCYEVEDSQKFCNPGFPIGCYITDKGHAKDACVISSEFHERDTFYIFNHVDIKIYYHVVETGSMGARLVAAKLEPKSFKHTHIDKPDCSGPAMDISNKASGEIKIAYTYSISFEEEKNIRWASRWDYILESMPHTHIQWFSIMNSLVIVLFLSGMVAMIMLRTLHKDIARYNQMDSTEDAQEEFGWKLVHGDIFRPPRKGMLLSVFLGSGTQILIMTFVTLFFACLGFLSPANRGALMTCAVVLWVLLGTPAGYVAARFYKSFGGEKWKTNVLLTSFLCPGIVFADFFIMNLILWGEGSSAAIPFGTLVAILALWFCISVPLTFIGAYFGFKKNAIEHPVRTNQIPRQIPEQSFYTKPLPGIIMGGILPFGCIFIQLFFILNSIWSHQMYYMFGFLFLVFIILVITCSEATILLCYFHLCAEDYHWQWRSFLTSGFTAVYFLIYAIHYFFSKLQITGTASTILYFGYTMIMVLIFFLFTGTIGFFACFWFVTKIYSVVKVD.

Positions 1 to 28 are cleaved as a signal peptide; it reads MSSRPPASPPAQGSRLLLLSLLLLGTVP. At 29–299 the chain is on the lumenal side; that stretch reads GPRPGSAFYL…LESMPHTHIQ (271 aa). Residues 300 to 320 traverse the membrane as a helical segment; the sequence is WFSIMNSLVIVLFLSGMVAMI. Topologically, residues 321–373 are cytoplasmic; the sequence is MLRTLHKDIARYNQMDSTEDAQEEFGWKLVHGDIFRPPRKGMLLSVFLGSGTQ. A helical membrane pass occupies residues 374–394; the sequence is ILIMTFVTLFFACLGFLSPAN. Residues 395-397 lie on the Lumenal side of the membrane; the sequence is RGA. A helical membrane pass occupies residues 398 to 418; sequence LMTCAVVLWVLLGTPAGYVAA. At 419–436 the chain is on the cytoplasmic side; it reads RFYKSFGGEKWKTNVLLT. Residues 437–457 traverse the membrane as a helical segment; it reads SFLCPGIVFADFFIMNLILWG. At 458 to 465 the chain is on the lumenal side; that stretch reads EGSSAAIP. The helical transmembrane segment at 466–486 threads the bilayer; the sequence is FGTLVAILALWFCISVPLTFI. Topologically, residues 487–521 are cytoplasmic; that stretch reads GAYFGFKKNAIEHPVRTNQIPRQIPEQSFYTKPLP. The chain crosses the membrane as a helical span at residues 522–542; that stretch reads GIIMGGILPFGCIFIQLFFIL. Residues 543 to 553 are Lumenal-facing; the sequence is NSIWSHQMYYM. Residues 554 to 574 form a helical membrane-spanning segment; that stretch reads FGFLFLVFIILVITCSEATIL. At 575–590 the chain is on the cytoplasmic side; it reads LCYFHLCAEDYHWQWR. The helical transmembrane segment at 591–611 threads the bilayer; that stretch reads SFLTSGFTAVYFLIYAIHYFF. Residues 612-630 lie on the Lumenal side of the membrane; the sequence is SKLQITGTASTILYFGYTM. The chain crosses the membrane as a helical span at residues 631–651; that stretch reads IMVLIFFLFTGTIGFFACFWF. Residues 652–662 are Cytoplasmic-facing; that stretch reads VTKIYSVVKVD.

The protein belongs to the nonaspanin (TM9SF) (TC 9.A.2) family.

The protein resides in the endosome membrane. It is found in the golgi outpost. Its subcellular location is the cytoplasm. It localises to the cytoskeleton. The protein localises to the microtubule organizing center. In the intracellular compartments, may function as a channel or small molecule transporter. The protein is Transmembrane 9 superfamily member 2 (Tm9sf2) of Mus musculus (Mouse).